Consider the following 115-residue polypeptide: Large ribosomal subunit protein bL19 (115 aa).

This sequence belongs to the bacterial ribosomal protein bL19 family.

Functionally, this protein is located at the 30S-50S ribosomal subunit interface and may play a role in the structure and function of the aminoacyl-tRNA binding site. This chain is Large ribosomal subunit protein bL19, found in Parabacteroides distasonis (strain ATCC 8503 / DSM 20701 / CIP 104284 / JCM 5825 / NCTC 11152).